A 134-amino-acid polypeptide reads, in one-letter code: Complexin-2 (134 aa).

The interval 1 to 114 (MDFVMKQALG…CGDEEEEEEE (114 aa)) is disordered. The span at 15-85 (DMGKMLGGEE…EEKEAEEKAA (71 aa)) shows a compositional bias: basic and acidic residues. Positions 28–84 (PDAQKKEEERQEALRQQEEERKAKHARMEAEREKVRQQIRDKYGLKKKEEKEAEEKA) form a coiled coil. An interaction with the SNARE complex region spans residues 41–97 (LRQQEEERKAKHARMEAEREKVRQQIRDKYGLKKKEEKEAEEKAALEQPCEGSLTRP). The residue at position 93 (Ser93) is a Phosphoserine.

The protein belongs to the complexin/synaphin family. In terms of assembly, binds to the SNARE core complex containing SNAP25, VAMP2 and STX1A. In terms of tissue distribution, nervous system. Also present in adrenal chromaffin cells (at protein level).

It is found in the cytoplasm. The protein localises to the cytosol. Its subcellular location is the presynapse. The protein resides in the nucleus. It localises to the perikaryon. In terms of biological role, negatively regulates the formation of synaptic vesicle clustering at active zone to the presynaptic membrane in postmitotic neurons. Positively regulates a late step in exocytosis of various cytoplasmic vesicles, such as synaptic vesicles and other secretory vesicles. Also involved in mast cell exocytosis. This chain is Complexin-2 (CPLX2), found in Bos taurus (Bovine).